The sequence spans 400 residues: Malonyl CoA-acyl carrier protein transacylase (400 aa).

Catalysis depends on residues Ser92 and His201.

Belongs to the FabD family.

The catalysed reaction is holo-[ACP] + malonyl-CoA = malonyl-[ACP] + CoA. Functionally, is involved in the mycosubtilin synthetase assembly, by catalyzing the transfer of malonyl groups to a specific acyl-carrier-protein domain on MycA. The sequence is that of Malonyl CoA-acyl carrier protein transacylase (fenF) from Bacillus subtilis.